Consider the following 258-residue polypeptide: Ribosome maturation factor RimP (258 aa).

2 disordered regions span residues 48 to 88 and 212 to 258; these read PQRP…PTSA and IFKK…AEND. Basic residues predominate over residues 215 to 224; it reads KPQKPGKKPG.

Belongs to the RimP family.

The protein localises to the cytoplasm. Its function is as follows. Required for maturation of 30S ribosomal subunits. This chain is Ribosome maturation factor RimP, found in Desulfovibrio desulfuricans (strain ATCC 27774 / DSM 6949 / MB).